The primary structure comprises 115 residues: NAD(P)H-quinone oxidoreductase subunit M (115 aa).

It belongs to the complex I NdhM subunit family. As to quaternary structure, NDH-1 can be composed of about 15 different subunits; different subcomplexes with different compositions have been identified which probably have different functions.

The protein resides in the cellular thylakoid membrane. It carries out the reaction a plastoquinone + NADH + (n+1) H(+)(in) = a plastoquinol + NAD(+) + n H(+)(out). The enzyme catalyses a plastoquinone + NADPH + (n+1) H(+)(in) = a plastoquinol + NADP(+) + n H(+)(out). In terms of biological role, NDH-1 shuttles electrons from an unknown electron donor, via FMN and iron-sulfur (Fe-S) centers, to quinones in the respiratory and/or the photosynthetic chain. The immediate electron acceptor for the enzyme in this species is believed to be plastoquinone. Couples the redox reaction to proton translocation, and thus conserves the redox energy in a proton gradient. Cyanobacterial NDH-1 also plays a role in inorganic carbon-concentration. This chain is NAD(P)H-quinone oxidoreductase subunit M, found in Prochlorococcus marinus (strain SARG / CCMP1375 / SS120).